The following is a 291-amino-acid chain: AA14 family lytic polysaccharide monooxygenase (291 aa).

An N-terminal signal peptide occupies residues 1-17; sequence MLTTAILFTSLAGSAYA. Asn-141 carries an N-linked (GlcNAc...) asparagine glycan. Disulfide bonds link Cys-192/Cys-197, Cys-199/Cys-220, and Cys-240/Cys-247.

Belongs to the polysaccharide monooxygenase AA14 family. Cu(2+) is required as a cofactor.

The protein localises to the secreted. Functionally, lytic polysaccharide monooxygenase (LPMO) that is active against heteroxylan, xyloglucan and cellulose in beta-cellulose and released native oligosaccharides and corresponding C1- and/or C4-oxidized products. May act mainly on heteroxylan with numerous arabinosyl substituents between cellulose fibers rather than on recalcitrant xylan tightly associated with cellulose. Catalysis by LPMOs requires the reduction of the active-site copper from Cu(II) to Cu(I) by a reducing agent and H(2)O(2) or O(2) as a cosubstrate. Shows a branched chain preference, and has synergistic effects with the Penicillium parvum debranching enzyme ABF62C in an enzyme- and ascorbic acid-dependent manner. Also has synergistic effects with the Penicillium parvum GH10 endoxylanase XYN1, and the degree of synergy was greater with step-by-step addition than with simultaneous addition. The chain is AA14 family lytic polysaccharide monooxygenase from Sordaria brevicollis.